The chain runs to 343 residues: Lactamase-like protein nscB (343 aa).

Zn(2+) is bound by residues His-118, His-120, Asp-122, and His-123. Asp-122 (proton donor/acceptor) is an active-site residue.

It belongs to the metallo-beta-lactamase superfamily. Zn(2+) is required as a cofactor.

It functions in the pathway secondary metabolite biosynthesis. In terms of biological role, lactamase-like protein; part of the gene cluster that mediates the biosynthesis of neosartoricin B, a prenylated anthracenone that probably exhibits T-cell antiproliferative activity, suggestive of a physiological role as an immunosuppressive agent. The non-reducing polyketide synthase nscA probably synthesizes and cyclizes the decaketide backbone. The hydrolase nscB then mediates the product release through hydrolysis followed by spontaneous decarboxylation. The prenyltransferase nscD catalyzes the addition of the dimethylallyl group to the aromatic C5. The FAD-dependent monooxygenase nscC is then responsible for the stereospecific hydroxylation at C2. Neosartoricin B can be converted into two additional compounds neosartoricins C and D. Neosartoricin C is a spirocyclic compound that is cyclized through the attack of C3 hydroxyl on C14, followed by dehydration. On the other hand, neosartoricin D is a further cyclized compound in which attack of C2 on C14 in neosartoricin C results in the formation of the acetal-containing dioxabicyclo-octanone ring. Both of these compounds are novel and possibly represent related metabolites of the gene cluster. The chain is Lactamase-like protein nscB from Arthroderma otae (strain ATCC MYA-4605 / CBS 113480) (Microsporum canis).